A 61-amino-acid polypeptide reads, in one-letter code: MLNIFSLICICLNSVLYSSSFFVAKLPEAYAFLNPIVDVMPVIPVLFFLLAFVWQAAVSFR.

Positions 1 to 24 are excised as a propeptide; that stretch reads MLNIFSLICICLNSVLYSSSFFVA. A helical transmembrane segment spans residues 40-60; that stretch reads MPVIPVLFFLLAFVWQAAVSF.

The protein belongs to the PsbK family. In terms of assembly, PSII is composed of 1 copy each of membrane proteins PsbA, PsbB, PsbC, PsbD, PsbE, PsbF, PsbH, PsbI, PsbJ, PsbK, PsbL, PsbM, PsbT, PsbX, PsbY, PsbZ, Psb30/Ycf12, at least 3 peripheral proteins of the oxygen-evolving complex and a large number of cofactors. It forms dimeric complexes.

Its subcellular location is the plastid. It localises to the chloroplast thylakoid membrane. One of the components of the core complex of photosystem II (PSII). PSII is a light-driven water:plastoquinone oxidoreductase that uses light energy to abstract electrons from H(2)O, generating O(2) and a proton gradient subsequently used for ATP formation. It consists of a core antenna complex that captures photons, and an electron transfer chain that converts photonic excitation into a charge separation. The protein is Photosystem II reaction center protein K of Morus indica (Mulberry).